The primary structure comprises 239 residues: Purine nucleoside phosphorylase DeoD-type 1 (239 aa).

His5 is an a purine D-ribonucleoside binding site. Phosphate is bound by residues Gly21, Arg25, Arg44, and 88-91 (RVGS). Residues 180-182 (EME) and 204-205 (SD) each bind a purine D-ribonucleoside. Catalysis depends on Asp205, which acts as the Proton donor.

The protein belongs to the PNP/UDP phosphorylase family. In terms of assembly, homohexamer; trimer of homodimers.

The catalysed reaction is a purine D-ribonucleoside + phosphate = a purine nucleobase + alpha-D-ribose 1-phosphate. The enzyme catalyses a purine 2'-deoxy-D-ribonucleoside + phosphate = a purine nucleobase + 2-deoxy-alpha-D-ribose 1-phosphate. In terms of biological role, catalyzes the reversible phosphorolytic breakdown of the N-glycosidic bond in the beta-(deoxy)ribonucleoside molecules, with the formation of the corresponding free purine bases and pentose-1-phosphate. This Vibrio parahaemolyticus serotype O3:K6 (strain RIMD 2210633) protein is Purine nucleoside phosphorylase DeoD-type 1.